We begin with the raw amino-acid sequence, 51 residues long: TLSGPVSDPAKNDGGFEVIKKHKEHIAAYGEGNERHETADINTFLWGVANR.

Belongs to the glutamine synthetase family. Homooctamer.

Its subcellular location is the cytoplasm. The catalysed reaction is L-glutamate + NH4(+) + ATP = L-glutamine + ADP + phosphate + H(+). The chain is Glutamine synthetase from Vitis sp. (Grape).